Reading from the N-terminus, the 288-residue chain is Quinate/shikimate dehydrogenase (288 aa).

Residues K71 and D107 each contribute to the substrate site. Residues 132-135 (AGGA), 155-158 (NRRD), K205, 232-235 (CVYN), and G255 contribute to the NAD(+) site.

Belongs to the shikimate dehydrogenase family. In terms of assembly, homodimer.

The enzyme catalyses L-quinate + NAD(+) = 3-dehydroquinate + NADH + H(+). The catalysed reaction is L-quinate + NADP(+) = 3-dehydroquinate + NADPH + H(+). It catalyses the reaction shikimate + NADP(+) = 3-dehydroshikimate + NADPH + H(+). It carries out the reaction shikimate + NAD(+) = 3-dehydroshikimate + NADH + H(+). Its pathway is metabolic intermediate biosynthesis; chorismate biosynthesis; chorismate from D-erythrose 4-phosphate and phosphoenolpyruvate: step 4/7. Functionally, the actual biological function of YdiB remains unclear, nor is it known whether 3-dehydroshikimate or quinate represents the natural substrate. Catalyzes the reversible NAD-dependent reduction of both 3-dehydroshikimate (DHSA) and 3-dehydroquinate to yield shikimate (SA) and quinate, respectively. It can use both NAD or NADP for catalysis, however it has higher catalytic efficiency with NAD. This Escherichia coli (strain 55989 / EAEC) protein is Quinate/shikimate dehydrogenase.